The primary structure comprises 361 residues: Teichoic acids export ATP-binding protein TagH (361 aa).

One can recognise an ABC transporter domain in the interval 13–246 (TKEYDLYKSQ…YREFTKWFKG (234 aa)). 60–67 (GVNGSGKS) contributes to the ATP binding site. The interval 247 to 361 (QSKKEKKHFQ…HDTNATSGVK (115 aa)) is unknown.

Belongs to the ABC transporter superfamily. Teichoic acids exporter (TC 3.A.1.104.1) family. As to quaternary structure, the complex is composed of two ATP-binding proteins (TagH) and two transmembrane proteins (TagG).

The protein localises to the cell membrane. The catalysed reaction is ATP + H2O + teichoic acidSide 1 = ADP + phosphate + teichoic acidSide 2.. In terms of biological role, part of the ABC transporter complex TagGH involved in teichoic acids export. Responsible for energy coupling to the transport system. In Levilactobacillus brevis (strain ATCC 367 / BCRC 12310 / CIP 105137 / JCM 1170 / LMG 11437 / NCIMB 947 / NCTC 947) (Lactobacillus brevis), this protein is Teichoic acids export ATP-binding protein TagH.